A 310-amino-acid polypeptide reads, in one-letter code: Probable deoxyhypusine synthase (310 aa).

Lys284 (nucleophile) is an active-site residue.

It belongs to the deoxyhypusine synthase family. Requires NAD(+) as cofactor.

It catalyses the reaction [eIF5A protein]-L-lysine + spermidine = [eIF5A protein]-deoxyhypusine + propane-1,3-diamine. It participates in protein modification; eIF5A hypusination. Its function is as follows. Catalyzes the NAD-dependent oxidative cleavage of spermidine and the subsequent transfer of the butylamine moiety of spermidine to the epsilon-amino group of a specific lysine residue of the eIF-5A precursor protein to form the intermediate deoxyhypusine residue. The protein is Probable deoxyhypusine synthase (dys) of Thermoplasma acidophilum (strain ATCC 25905 / DSM 1728 / JCM 9062 / NBRC 15155 / AMRC-C165).